Here is an 891-residue protein sequence, read N- to C-terminus: Schlafen family member 5 (891 aa).

K59 is covalently cross-linked (Glycyl lysine isopeptide (Lys-Gly) (interchain with G-Cter in SUMO2)). Residue 578-585 coordinates ATP; it reads GLPGSGKT.

The protein belongs to the Schlafen family. Subgroup III subfamily.

In terms of biological role, may have a role in hematopoietic cell differentiation. This chain is Schlafen family member 5 (SLFN5), found in Homo sapiens (Human).